The following is a 211-amino-acid chain: Large ribosomal subunit protein eL13 (211 aa).

Lys16 is subject to N6-acetyllysine. A phosphoserine mark is found at Ser77 and Ser106. Residues Lys123 and Lys145 each participate in a glycyl lysine isopeptide (Lys-Gly) (interchain with G-Cter in SUMO2) cross-link. Lys174 is covalently cross-linked (Glycyl lysine isopeptide (Lys-Gly) (interchain with G-Cter in SUMO1); alternate). Residues Lys174 and Lys177 each participate in a glycyl lysine isopeptide (Lys-Gly) (interchain with G-Cter in SUMO2); alternate cross-link. Lys177 is modified (N6-acetyllysine; alternate).

It belongs to the eukaryotic ribosomal protein eL13 family. As to quaternary structure, component of the 60S large ribosomal subunit (LSU).

The protein localises to the cytoplasm. Its function is as follows. Component of the ribosome, a large ribonucleoprotein complex responsible for the synthesis of proteins in the cell. The small ribosomal subunit (SSU) binds messenger RNAs (mRNAs) and translates the encoded message by selecting cognate aminoacyl-transfer RNA (tRNA) molecules. The large subunit (LSU) contains the ribosomal catalytic site termed the peptidyl transferase center (PTC), which catalyzes the formation of peptide bonds, thereby polymerizing the amino acids delivered by tRNAs into a polypeptide chain. The nascent polypeptides leave the ribosome through a tunnel in the LSU and interact with protein factors that function in enzymatic processing, targeting, and the membrane insertion of nascent chains at the exit of the ribosomal tunnel. As part of the LSU, it is probably required for its formation and the maturation of rRNAs. Plays a role in bone development. The protein is Large ribosomal subunit protein eL13 (RPL13) of Oryctolagus cuniculus (Rabbit).